A 59-amino-acid polypeptide reads, in one-letter code: Large ribosomal subunit protein bL32 (59 aa).

The segment covering 1-16 has biased composition (basic residues); it reads MAVPKRKTSPSRRGMR. The tract at residues 1-20 is disordered; the sequence is MAVPKRKTSPSRRGMRRSHD.

The protein belongs to the bacterial ribosomal protein bL32 family.

The chain is Large ribosomal subunit protein bL32 from Novosphingobium aromaticivorans (strain ATCC 700278 / DSM 12444 / CCUG 56034 / CIP 105152 / NBRC 16084 / F199).